Here is a 107-residue protein sequence, read N- to C-terminus: Iron-sulfur cluster assembly protein CyaY (107 aa).

This sequence belongs to the frataxin family.

In terms of biological role, involved in iron-sulfur (Fe-S) cluster assembly. May act as a regulator of Fe-S biogenesis. In Enterobacter sp. (strain 638), this protein is Iron-sulfur cluster assembly protein CyaY.